Here is a 167-residue protein sequence, read N- to C-terminus: Large ribosomal subunit protein uL10 (167 aa).

Belongs to the universal ribosomal protein uL10 family. Part of the ribosomal stalk of the 50S ribosomal subunit. The N-terminus interacts with L11 and the large rRNA to form the base of the stalk. The C-terminus forms an elongated spine to which L12 dimers bind in a sequential fashion forming a multimeric L10(L12)X complex.

In terms of biological role, forms part of the ribosomal stalk, playing a central role in the interaction of the ribosome with GTP-bound translation factors. This chain is Large ribosomal subunit protein uL10, found in Ligilactobacillus salivarius (strain UCC118) (Lactobacillus salivarius).